A 584-amino-acid chain; its full sequence is Poly(A) RNA polymerase protein 2 (584 aa).

The segment covering 1 to 11 has biased composition (polar residues); the sequence is MGAKSVTASSS. Disordered stretches follow at residues 1–63 and 81–147; these read MGAK…LPKD and EGFD…QELE. Over residues 12–35 the composition is skewed to basic residues; sequence KKIKNRHNGKVKKSKKIKKVRKPQ. Basic and acidic residues predominate over residues 53 to 63; it reads NEQETNKLPKD. A compositionally biased stretch (acidic residues) spans 130-139; sequence SEDEQAEQEE. The Mg(2+) site is built by aspartate 236 and aspartate 238. ATP-binding residues include glycine 301, lysine 326, asparagine 431, and arginine 435. The region spanning 371 to 431 is the PAP-associated domain; that stretch reads NLGVLLIEFF…AIQDPGDESN (61 aa). A disordered region spans residues 525–584; that stretch reads TSTATATTTDDDYEITNPPAKKAKIEEKPESEPAKRNSGETYITVSSEDDDEDGYNPYTL. The span at 547–562 shows a compositional bias: basic and acidic residues; it reads AKIEEKPESEPAKRNS.

The protein belongs to the DNA polymerase type-B-like family. In terms of assembly, component of the TRAMP complex (also called TRF4 complex) composed of at least HUL4, MTR4, PAP2/TRF4 and either AIR1 or AIR2. Interacts with NOP53 and POL2. Interacts directly with AIR2. The cofactor is Mg(2+). Mn(2+) serves as cofactor.

Its subcellular location is the nucleus. It catalyses the reaction RNA(n) + ATP = RNA(n)-3'-adenine ribonucleotide + diphosphate. Its function is as follows. Catalytic subunit of the TRAMP complex which has a poly(A) RNA polymerase activity and is involved in a post-transcriptional quality control mechanism limiting inappropriate expression of genetic information. Polyadenylation is required for the degradative activity of the exosome on several of its nuclear RNA substrates like cryptic transcripts generated by RNA polymerase II and III, or hypomethylated pre-tRNAi-Met. Polyadenylates RNA processing and degradation intermediates of snRNAs, snoRNAs and mRNAs that accumulate in strains lacking a functional exosome. TRF4 is also required for proper nuclear division in mitosis, DNA damage repair and sister chromatid cohesion. Involved in the regulation of histone mRNA levels. May mediate mitotic chromosome condensation. The sequence is that of Poly(A) RNA polymerase protein 2 (PAP2) from Saccharomyces cerevisiae (strain ATCC 204508 / S288c) (Baker's yeast).